The chain runs to 221 residues: MASHQDKASYQAGETKARTEEKTGQAVGATKDTAQHAKDRAADAAGHAAGKGQDAKEATKQKASDTGSYLGKKTDEAKHKAGETTEATKHKAGETTEAAKQKAGETTEAAKQKAGETTETTKQKAGETTEAARQKAADAMEAAKQKAAEAGQYAKDTAVSGKDKSGGVIQQATEQVKSAAAGRKDAVMSTLGMGGDNKQGDANTNTNTNTTKDSSTITRDH.

The tract at residues M1 to H221 is disordered. Over residues T33 to A42 the composition is skewed to basic and acidic residues. Residues D43 to G52 show a composition bias toward low complexity. Composition is skewed to basic and acidic residues over residues Q53 to A63 and K72 to A147. A compositionally biased stretch (polar residues) spans K212–H221.

This sequence belongs to the LEA type 4 family.

This Zea mays (Maize) protein is Late embryogenesis abundant protein, group 3 (MGL3).